The sequence spans 238 residues: Isoamyl acetate-hydrolyzing esterase (238 aa).

Ser12 acts as the Nucleophile in catalysis. The active-site Proton donor is the Asp187. Residue His190 is the Proton acceptor of the active site.

It belongs to the 'GDSL' lipolytic enzyme family. IAH1 subfamily. Homodimer.

The enzyme catalyses 3-methylbutyl acetate + H2O = 3-methylbutanol + acetate + H(+). Plays a crucial role in the hydrolysis of isoamyl acetate in sake mash. Hydrolyzes short chain esters from acetate (C2) to hexanoate (C6), showing more specificity for shorter chain exters. No activity for decanoate (C10) esters. The sequence is that of Isoamyl acetate-hydrolyzing esterase from Saccharomyces cerevisiae (strain ATCC 204508 / S288c) (Baker's yeast).